The following is a 103-amino-acid chain: Cystatin-A8 (103 aa).

Positions 1-20 (MESEEMLAGGLTEPRPATPE) are disordered. Positions 51–55 (QVVAG) match the Secondary area of contact motif.

Belongs to the cystatin family.

The protein localises to the cytoplasm. Functionally, this is an intracellular thiol proteinase inhibitor. This chain is Cystatin-A8, found in Sus scrofa (Pig).